Reading from the N-terminus, the 852-residue chain is Carbohydrate-responsive element-binding protein (852 aa).

The segment covering 1 to 12 has biased composition (low complexity); it reads MAGALAGLAAGL. Disordered stretches follow at residues 1 to 36 and 54 to 80; these read MAGA…SLRR and VSSP…FGPR. S20, S23, and S25 each carry phosphoserine. A Phosphothreonine modification is found at T27. Position 29 is a phosphoserine (S29). S196 bears the Phosphoserine mark. Disordered stretches follow at residues 328–365, 486–527, and 548–648; these read DSLF…CPGP, PCFS…NNPC, and STLL…NKTE. Low complexity predominate over residues 505–521; the sequence is ASPPTLAPATASPPTTA. Over residues 548 to 559 the composition is skewed to polar residues; the sequence is STLLRSPGSPQE. Phosphoserine; by AMPK is present on S556. The segment covering 568–584 has biased composition (pro residues); the sequence is FLPPTPAPTPPRPPPGP. A phosphoserine mark is found at S602, S614, and S631. The bHLH domain occupies 649-703; that stretch reads NRRITHISAEQKRRFNIKLGFDTLHGLVSTLSAQPSLKVSKATTLQKTAEYILML. The tract at residues 703–724 is leucine-zipper; that stretch reads LQQERAGLQEEAQQLRDEIEEL.

In terms of assembly, binds DNA as a heterodimer with MLX/TCFL4. Phosphorylation at Ser-556 by AMPK inactivates the DNA-binding activity. As to expression, expressed in liver, heart, kidney, cerebellum and intestinal tissues.

It localises to the nucleus. Functionally, binds DNA as a heterodimer with MLX/TCFL4 and activates transcription. Binds to the canonical E box sequence 5'-CACGTG-3'. Plays a role in transcriptional activation of glycolytic target genes. Involved in glucose-responsive gene regulation. Regulates transcription in response to changes in cellular carbohydrate abundance such as occurs during fasting to feeding metabolic transition. Refeeding stimulates MLXIPL/ChREBP transcription factor, leading to increased BCKDK to PPM1K expression ratio, phosphorylation and activation of ACLY that ultimately results in the generation of malonyl-CoA and oxaloacetate immediate substrates of de novo lipogenesis and gluconeogenesis, respectively. This is Carbohydrate-responsive element-binding protein (MLXIPL) from Homo sapiens (Human).